We begin with the raw amino-acid sequence, 214 residues long: MRIMLLGAPGAGKGTQAQFIMEKYGVPQISTGDMLRAAVKAGTPLGLEAKKVMDAGQLVSDELIIGLVKERIAQDDCAKGFLLDGFPRTIPQADAMAASGIDIDHVIEIDVPDEEIVKRMSGRRVHPGSGRVYHIVYNPPKVEGKDDVTGEDLAIRPDDEESTVRKRLGIYHEQTKPLVEYYGKVAEQGKLTYNKFDGTQSVGAVSEAIVKAIG.

Gly-10 to Thr-15 serves as a coordination point for ATP. The interval Ser-30–Val-59 is NMP. Residues Thr-31, Arg-36, Gln-57–Val-59, Gly-85–Arg-88, and Gln-92 each bind AMP. The LID stretch occupies residues Gly-122–Asp-159. Residues Arg-123 and Val-132 to Tyr-133 each bind ATP. Residues Arg-156 and Arg-167 each contribute to the AMP site. Gln-200 serves as a coordination point for ATP.

Belongs to the adenylate kinase family. In terms of assembly, monomer.

The protein resides in the cytoplasm. It catalyses the reaction AMP + ATP = 2 ADP. Its pathway is purine metabolism; AMP biosynthesis via salvage pathway; AMP from ADP: step 1/1. In terms of biological role, catalyzes the reversible transfer of the terminal phosphate group between ATP and AMP. Plays an important role in cellular energy homeostasis and in adenine nucleotide metabolism. This chain is Adenylate kinase, found in Shewanella loihica (strain ATCC BAA-1088 / PV-4).